The sequence spans 164 residues: 3-isopropylmalate dehydratase small subunit 2 (164 aa).

The protein belongs to the LeuD family. LeuD type 2 subfamily. As to quaternary structure, heterodimer of LeuC and LeuD.

The catalysed reaction is (2R,3S)-3-isopropylmalate = (2S)-2-isopropylmalate. The protein operates within amino-acid biosynthesis; L-leucine biosynthesis; L-leucine from 3-methyl-2-oxobutanoate: step 2/4. In terms of biological role, catalyzes the isomerization between 2-isopropylmalate and 3-isopropylmalate, via the formation of 2-isopropylmaleate. This is 3-isopropylmalate dehydratase small subunit 2 (leuD2) from Pyrococcus furiosus (strain ATCC 43587 / DSM 3638 / JCM 8422 / Vc1).